Here is a 473-residue protein sequence, read N- to C-terminus: Adenosylhomocysteinase (473 aa).

Positions 64, 139, and 199 each coordinate substrate. Residue 200 to 202 coordinates NAD(+); that stretch reads TTT. Substrate contacts are provided by lysine 229 and aspartate 233. Residues asparagine 234, 263 to 268, glutamate 286, asparagine 321, 342 to 344, and asparagine 387 each bind NAD(+); these read GYGDVG and IGH.

The protein belongs to the adenosylhomocysteinase family. Requires NAD(+) as cofactor.

The protein resides in the cytoplasm. It carries out the reaction S-adenosyl-L-homocysteine + H2O = L-homocysteine + adenosine. It functions in the pathway amino-acid biosynthesis; L-homocysteine biosynthesis; L-homocysteine from S-adenosyl-L-homocysteine: step 1/1. Its function is as follows. May play a key role in the regulation of the intracellular concentration of adenosylhomocysteine. This Paraburkholderia phytofirmans (strain DSM 17436 / LMG 22146 / PsJN) (Burkholderia phytofirmans) protein is Adenosylhomocysteinase.